We begin with the raw amino-acid sequence, 380 residues long: Tubby-like F-box protein 9 (380 aa).

Positions proline 30 to threonine 76 constitute an F-box domain. The disordered stretch occupies residues serine 258 to glycine 283. A compositionally biased stretch (polar residues) spans leucine 272–glycine 283.

Belongs to the TUB family. In terms of assembly, part of a SCF (SKP1-cullin-F-box) protein ligase complex. Interacts with SKP1A/ASK1 and XERICO. Ubiquitous.

Its pathway is protein modification; protein ubiquitination. Component of SCF(ASK-cullin-F-box) E3 ubiquitin ligase complexes, which may mediate the ubiquitination and subsequent proteasomal degradation of target proteins. Confers sensitivity to ABA during seed germination and early seedling development. In Arabidopsis thaliana (Mouse-ear cress), this protein is Tubby-like F-box protein 9.